We begin with the raw amino-acid sequence, 277 residues long: Transcription factor HES-4-B (277 aa).

A disordered region spans residues 1-44 (MPADSMEKPTASPIAGAPANSAQTPDKPKSASEHRKSSKPIMEK). A compositionally biased stretch (basic and acidic residues) spans 26–35 (DKPKSASEHR). The 58-residue stretch at 34–91 (HRKSSKPIMEKRRRARINESLGQLKTLILDALKKDSSRHSKLEKADILEMTVKHLRNL) folds into the bHLH domain. The region spanning 110–143 (YRAGFNECMNEVTRFLSTCEGVNTEVRTRLLGHL) is the Orange domain. The interval 258–277 (VSPLGGSTRADSAESVWRPW) is disordered. A WRPW motif motif is present at residues 274-277 (WRPW).

In terms of assembly, transcription repression requires formation of a complex with a corepressor protein of the Groucho/TLE family. Interacts with the bHLH protein hes6; this interaction may inhibit the transcriptional repressor activity. Binds DNA in the form of a heterodimer with the bHLH protein hey1/hrt1. Interacts (via Orange domain) with id3 (via HLH domain). Dynamically expressed in the borders of several tissue territories. Expressed in the pre-placodal ectoderm (PPE) from gastrula stage. During gastrulation, expressed in the deep layer of the dorsal lip, the Spemann organizer and three distinct regions in the prospective neuroectoderm: neural plate border, presumptive floor plate/notoplate and anterior neural plate. At later stages, expression is localized to the anterior of the prechordal plate, the presomitic mesoderm, neural tube, neural crest derivatives and several tissues of the central nervous system, with expression in the developing floor plate continues to at least the tadpole stage. From the early tailbud stage, expressed in the dorsoanterior region of the developing pronephros. During early tailbud stages, broadly expressed within the pronephric mesoderm. and in the sensorial layer of the ectoderm covering the pronephros anlagen. During late tailbud to early tadpole stages, expressed in the ventral region of the pronephros. Expression remains in the proximal and distal tubules at late tadpole stages (stage 35).

The protein localises to the nucleus. In terms of biological role, transcriptional repressor. Binds DNA on N-box motifs: 5'-CACNAG-3'. Promotes floor plate development and prechordal plate development. Required for lens development as early as the stage of lens field formation, partly through regulation of gene expression of the cell cycle inhibitor cdknx/p27(xic1). Required for formation of the neural crest downstream of multiple signaling pathways, and acts at the neural plate border via both DNA-binding dependent and independent mechanisms; acts in a DNA-binding dependent manner to repress pro-apoptotic and neural crest differentiation genes, including id3, delta1, and cdknx/p27(xic1), and thus promote the cell survival of neural plate border cells and maintain them in an undifferentiated state. Represses transcription of id3, at least in part through the repression of bmp4. On the other hand, acts in a DNA-independent manner separate from the transcriptional repressor function, to stimulate cell proliferation and promote neural crest formation. Via this DNA-independent route, acts in neurulae upstream of stat3 to transiently up-regulate the notch ligand dll1/delta1, which in turn up-regulates id3 expression. Then interacts directly with id3, which blocks the transcriptional repressor function of hes4-B/hairy2b to allow the progression of neural crest progenitors through specification and differentiation. Also acts via repressor-dependent and repressor-independent mechanisms in early gastrulae to establish the prospective anterior prechordal mesoderm identity in the Spemann organizer; induces specific genes independently from direct transcriptional regulation, and represses the genes specific for neighboring tissues through direct transcriptional repression. Modulates lateral inhibition during notch signaling and regulates the cell context dependent effects of notch (which can have inhibitory, permissive or enhancing roles in muscle or neural differentiation). Inhibits myogenesis. This chain is Transcription factor HES-4-B (hes4-b), found in Xenopus laevis (African clawed frog).